Reading from the N-terminus, the 206-residue chain is MCEPAPPKPTQSAWHSFPECPALLLLLSLLLLPLGLPVLGAPPRLICDSRVLERYILEAREAENVTMGCAQGCSFSENITVPDTKVNFYTWKRMDVGQQALEVWQGLALLSEAILRGQALLANASQPSETPQLHVDKAVSSLRSLTSLLRALGAQKEAMSLPEEASPAPLRTFTVDTLCKLFRIYSNFLRGKLTLYTGEACRRGDR.

The N-terminal stretch at 1–40 (MCEPAPPKPTQSAWHSFPECPALLLLLSLLLLPLGLPVLG) is a signal peptide. Intrachain disulfides connect C47/C201 and C69/C73. An N-linked (GlcNAc...) asparagine glycan is attached at N64. N-linked (GlcNAc...) asparagine glycosylation is found at N78 and N123.

Belongs to the EPO/TPO family. Produced by kidney or liver of adult mammals and by liver of fetal or neonatal mammals.

It is found in the secreted. Functionally, hormone involved in the regulation of erythrocyte proliferation and differentiation and the maintenance of a physiological level of circulating erythrocyte mass. Binds to EPOR leading to EPOR dimerization and JAK2 activation thereby activating specific downstream effectors, including STAT1 and STAT3. The protein is Erythropoietin (EPO) of Canis lupus familiaris (Dog).